Here is a 262-residue protein sequence, read N- to C-terminus: Small ribosomal subunit protein uS2 (262 aa).

This sequence belongs to the universal ribosomal protein uS2 family.

This is Small ribosomal subunit protein uS2 from Borrelia garinii subsp. bavariensis (strain ATCC BAA-2496 / DSM 23469 / PBi) (Borreliella bavariensis).